We begin with the raw amino-acid sequence, 703 residues long: Arylphorin subunit beta (703 aa).

A signal peptide spans 1-16 (MKTVIILAGLVALALG). N72 and N211 each carry an N-linked (GlcNAc...) asparagine glycan.

It belongs to the hemocyanin family. Arylphorin is a hexamer of subunits alpha and beta. As to expression, fat body.

It is found in the secreted. Its subcellular location is the extracellular space. Its function is as follows. Arylphorin is a larval storage protein (LSP) which may serve as a storage protein used primarily as a source of aromatic amino acids for protein synthesis during metamorphosis. It is a constituent of the sclerotizing system of the cuticle, and serves as a carrier for ecdysteroid hormone. The chain is Arylphorin subunit beta from Manduca sexta (Tobacco hawkmoth).